A 402-amino-acid chain; its full sequence is FMN-dependent alpha-hydroxy acid dehydrogenase qulF (402 aa).

The FMN hydroxy acid dehydrogenase domain maps to 22-394 (RLPAITTNPT…NRDCMRRISY (373 aa)). Tyrosine 48 provides a ligand contact to a 2-oxocarboxylate. Positions 130 and 152 each coordinate FMN. Residues tyrosine 154 and arginine 189 each coordinate a 2-oxocarboxylate. Residue lysine 265 coordinates FMN. The active-site Proton acceptor is histidine 289. A 2-oxocarboxylate is bound at residue arginine 292. FMN-binding positions include 320-324 (DSGVR) and 343-344 (GR).

Belongs to the FMN-dependent alpha-hydroxy acid dehydrogenase family. Requires FMN as cofactor.

In terms of biological role, FMN-dependent alpha-hydroxy acid dehydrogenase; part of the gene cluster that mediates the biosynthesis of quinolactacin A2 (QUL A2), a fungal alkaloid that features a quinolone-gamma-lactam hybrid, which is a potential pharmacophore for the treatment of cancer and Alzheimer's disease. The quinolone-gamma-lactam hybrid scaffold is synthesized from the combination of L-isoleucine (L-Ile) and the nonproteinogenic amino acid L-kynurenine, followed by quinolone cyclization, oxidative decarboxylation, and lactam formation. Additionally, the N-methyl group is derived from methionine, which might be catalyzed by an S-adenosylmethionine (SAM)-dependent methyltransferase. Bioconversion of L-tryptophan to L-kynurenine could be catalyzed by the indoleamine-2,3-dioxygenase (IDO) qulI to produce an unstable product, N-formyl-L-kynurenine, followed by kynurenine formamidase catalyzed hydrolysis. QulM then acts as a methyltransferase that methylates L-kynurenine at the N-4 position. The FMN-dependent alpha-hydroxy acid dehydrogenase qulF than functions as an oxidative decarboxylase which converts N-methylkynurenine into 2-aminobenzoylacetamide via 2 tandem reactions, including dehydrogenation and decarboxylation. An amidase located outside of the qul gene cluster further produces the unstable beta-keto acid precursor N-methyl-2-aminobenzoylacetate, which could be spontaneously dehydrated to form N-methyl-4-hydroxy-2-quinolone. The NRPS qulB is able to incorporate N-methyl-2-aminobenzoylacetate and efficiently compete with the spontaneous reaction. By further extending the beta-keto acid with L-Ile, qulA performs a Dieckmann condensation to form the gamma-lactam ring and release a 4-ketopyrrolidinone intermediate from the assembly line. This intermediate could plausibly further undergo a spontaneous cyclization to yield the final quinolone-gamma-lactam hybrid structure. This is FMN-dependent alpha-hydroxy acid dehydrogenase qulF from Penicillium citrinum.